Reading from the N-terminus, the 580-residue chain is Acyl-coenzyme A synthetase ACSM4, mitochondrial (580 aa).

The N-terminal 22 residues, 1 to 22 (MKVLLHCQRLRFIWLAKPAGRH), are a transit peptide targeting the mitochondrion. Residues 229–237 (TSGTTGSPK), 368–373 (EGYGQT), Asp-455, Arg-470, and Lys-566 each bind ATP.

Belongs to the ATP-dependent AMP-binding enzyme family. The cofactor is Mg(2+). Requires Mn(2+) as cofactor.

The protein localises to the mitochondrion. It catalyses the reaction a medium-chain fatty acid + ATP + CoA = a medium-chain fatty acyl-CoA + AMP + diphosphate. The catalysed reaction is hexanoate + ATP + CoA = hexanoyl-CoA + AMP + diphosphate. It carries out the reaction octanoate + ATP + CoA = octanoyl-CoA + AMP + diphosphate. The enzyme catalyses decanoate + ATP + CoA = decanoyl-CoA + AMP + diphosphate. It catalyses the reaction dodecanoate + ATP + CoA = dodecanoyl-CoA + AMP + diphosphate. In terms of biological role, catalyzes the activation of fatty acids by CoA to produce an acyl-CoA, the first step in fatty acid metabolism. Capable of activating medium-chain fatty acids with a preference for C6-12 fatty acids. In Mus musculus (Mouse), this protein is Acyl-coenzyme A synthetase ACSM4, mitochondrial (Acsm4).